Reading from the N-terminus, the 80-residue chain is Acyl carrier protein (80 aa).

In terms of domain architecture, Carrier spans 4-79 (EEIFNKIKDL…DAVSYIKSHQ (76 aa)). An O-(pantetheine 4'-phosphoryl)serine modification is found at Ser39.

This sequence belongs to the acyl carrier protein (ACP) family. 4'-phosphopantetheine is transferred from CoA to a specific serine of apo-ACP by AcpS. This modification is essential for activity because fatty acids are bound in thioester linkage to the sulfhydryl of the prosthetic group.

It is found in the cytoplasm. It participates in lipid metabolism; fatty acid biosynthesis. Carrier of the growing fatty acid chain in fatty acid biosynthesis. The chain is Acyl carrier protein from Lactobacillus acidophilus (strain ATCC 700396 / NCK56 / N2 / NCFM).